Reading from the N-terminus, the 241-residue chain is Ubiquinone biosynthesis O-methyltransferase (241 aa).

Residues Arg44, Gly63, Asp84, and Met128 each coordinate S-adenosyl-L-methionine.

Belongs to the methyltransferase superfamily. UbiG/COQ3 family.

The enzyme catalyses a 3-demethylubiquinol + S-adenosyl-L-methionine = a ubiquinol + S-adenosyl-L-homocysteine + H(+). It carries out the reaction a 3-(all-trans-polyprenyl)benzene-1,2-diol + S-adenosyl-L-methionine = a 2-methoxy-6-(all-trans-polyprenyl)phenol + S-adenosyl-L-homocysteine + H(+). The protein operates within cofactor biosynthesis; ubiquinone biosynthesis. Functionally, O-methyltransferase that catalyzes the 2 O-methylation steps in the ubiquinone biosynthetic pathway. The sequence is that of Ubiquinone biosynthesis O-methyltransferase from Hydrogenovibrio crunogenus (strain DSM 25203 / XCL-2) (Thiomicrospira crunogena).